A 789-amino-acid polypeptide reads, in one-letter code: Probable 3-hydroxyacyl-CoA dehydrogenase (789 aa).

This sequence belongs to the 3-hydroxyacyl-CoA dehydrogenase family.

The enzyme catalyses a (3S)-3-hydroxyacyl-CoA + NAD(+) = a 3-oxoacyl-CoA + NADH + H(+). The protein operates within lipid metabolism; fatty acid beta-oxidation. Involved in the degradation of long-chain fatty acids. The polypeptide is Probable 3-hydroxyacyl-CoA dehydrogenase (fadN) (Bacillus subtilis (strain 168)).